Here is a 133-residue protein sequence, read N- to C-terminus: ATP synthase epsilon chain, chloroplastic (133 aa).

It belongs to the ATPase epsilon chain family. In terms of assembly, F-type ATPases have 2 components, CF(1) - the catalytic core - and CF(0) - the membrane proton channel. CF(1) has five subunits: alpha(3), beta(3), gamma(1), delta(1), epsilon(1). CF(0) has three main subunits: a, b and c.

It localises to the plastid. The protein resides in the chloroplast thylakoid membrane. Produces ATP from ADP in the presence of a proton gradient across the membrane. The protein is ATP synthase epsilon chain, chloroplastic of Lotus japonicus (Lotus corniculatus var. japonicus).